A 110-amino-acid chain; its full sequence is Large ribosomal subunit protein uL22 (110 aa).

The protein belongs to the universal ribosomal protein uL22 family. Part of the 50S ribosomal subunit.

In terms of biological role, this protein binds specifically to 23S rRNA; its binding is stimulated by other ribosomal proteins, e.g. L4, L17, and L20. It is important during the early stages of 50S assembly. It makes multiple contacts with different domains of the 23S rRNA in the assembled 50S subunit and ribosome. Its function is as follows. The globular domain of the protein is located near the polypeptide exit tunnel on the outside of the subunit, while an extended beta-hairpin is found that lines the wall of the exit tunnel in the center of the 70S ribosome. In Aliivibrio fischeri (strain MJ11) (Vibrio fischeri), this protein is Large ribosomal subunit protein uL22.